Reading from the N-terminus, the 214-residue chain is Pyridoxine/pyridoxamine 5'-phosphate oxidase (214 aa).

Substrate-binding positions include 11 to 14 (RREY) and Lys-68. FMN-binding positions include 63 to 68 (RLVLLK), 78 to 79 (FT), Arg-84, Lys-85, and Gln-107. 2 residues coordinate substrate: Tyr-125 and Arg-129. Residues 142–143 (QS) and Trp-187 each bind FMN. 193–195 (RLH) provides a ligand contact to substrate. Position 197 (Arg-197) interacts with FMN.

This sequence belongs to the pyridoxamine 5'-phosphate oxidase family. As to quaternary structure, homodimer. It depends on FMN as a cofactor.

The enzyme catalyses pyridoxamine 5'-phosphate + O2 + H2O = pyridoxal 5'-phosphate + H2O2 + NH4(+). It carries out the reaction pyridoxine 5'-phosphate + O2 = pyridoxal 5'-phosphate + H2O2. The protein operates within cofactor metabolism; pyridoxal 5'-phosphate salvage; pyridoxal 5'-phosphate from pyridoxamine 5'-phosphate: step 1/1. Its pathway is cofactor metabolism; pyridoxal 5'-phosphate salvage; pyridoxal 5'-phosphate from pyridoxine 5'-phosphate: step 1/1. In terms of biological role, catalyzes the oxidation of either pyridoxine 5'-phosphate (PNP) or pyridoxamine 5'-phosphate (PMP) into pyridoxal 5'-phosphate (PLP). The polypeptide is Pyridoxine/pyridoxamine 5'-phosphate oxidase (Blochmanniella floridana).